Reading from the N-terminus, the 370-residue chain is 3-dehydroquinate synthase (370 aa).

NAD(+) contacts are provided by residues 107–111 (GVIGD), 131–132 (TS), K144, and K153. 3 residues coordinate Zn(2+): E186, H249, and H267.

Belongs to the sugar phosphate cyclases superfamily. Dehydroquinate synthase family. It depends on Co(2+) as a cofactor. The cofactor is Zn(2+). Requires NAD(+) as cofactor.

The protein localises to the cytoplasm. It carries out the reaction 7-phospho-2-dehydro-3-deoxy-D-arabino-heptonate = 3-dehydroquinate + phosphate. It participates in metabolic intermediate biosynthesis; chorismate biosynthesis; chorismate from D-erythrose 4-phosphate and phosphoenolpyruvate: step 2/7. Its function is as follows. Catalyzes the conversion of 3-deoxy-D-arabino-heptulosonate 7-phosphate (DAHP) to dehydroquinate (DHQ). This Jannaschia sp. (strain CCS1) protein is 3-dehydroquinate synthase.